A 172-amino-acid polypeptide reads, in one-letter code: dCTP pyrophosphatase (172 aa).

The enzyme catalyses dCTP + H2O = dCMP + diphosphate + H(+). The protein is dCTP pyrophosphatase (56) of Enterobacteria phage LZ5 (Bacteriophage LZ5).